A 341-amino-acid chain; its full sequence is ATPase GET3 (341 aa).

Residue 34-41 (KGGVGKTT) participates in ATP binding. D63 is a catalytic residue. ATP contacts are provided by E245 and N272. Positions 283 and 286 each coordinate Zn(2+).

Belongs to the arsA ATPase family. In terms of assembly, homodimer.

Its subcellular location is the cytoplasm. It is found in the endoplasmic reticulum. In terms of biological role, ATPase required for the post-translational delivery of tail-anchored (TA) proteins to the endoplasmic reticulum. Recognizes and selectively binds the transmembrane domain of TA proteins in the cytosol. This complex then targets to the endoplasmic reticulum by membrane-bound receptors, where the tail-anchored protein is released for insertion. This process is regulated by ATP binding and hydrolysis. ATP binding drives the homodimer towards the closed dimer state, facilitating recognition of newly synthesized TA membrane proteins. ATP hydrolysis is required for insertion. Subsequently, the homodimer reverts towards the open dimer state, lowering its affinity for the membrane-bound receptor, and returning it to the cytosol to initiate a new round of targeting. This is ATPase GET3 from Ajellomyces dermatitidis (strain ER-3 / ATCC MYA-2586) (Blastomyces dermatitidis).